We begin with the raw amino-acid sequence, 219 residues long: Large ribosomal subunit protein uL3 (219 aa).

Gln-151 carries the post-translational modification N5-methylglutamine.

The protein belongs to the universal ribosomal protein uL3 family. In terms of assembly, part of the 50S ribosomal subunit. Forms a cluster with proteins L14 and L19. Post-translationally, methylated by PrmB.

Functionally, one of the primary rRNA binding proteins, it binds directly near the 3'-end of the 23S rRNA, where it nucleates assembly of the 50S subunit. The chain is Large ribosomal subunit protein uL3 from Blochmanniella floridana.